A 324-amino-acid chain; its full sequence is Transcription factor TCP24 (324 aa).

The region spanning 50 to 108 (GKDRHSKVLTSKGLRDRRIRLSVATAIQFYDLQDRLGFDQPSKAVEWLINAASDSITDL) is the TCP domain. Disordered regions lie at residues 122–215 (QNQT…PMNH) and 261–297 (QRSS…NHQL). Low complexity predominate over residues 127–142 (SACSSGTSESSLLSLS). One can recognise a R domain in the interval 144–162 (TEIRGKARERARERTAKDR). A compositionally biased stretch (basic and acidic residues) spans 144-167 (TEIRGKARERARERTAKDRDKDLQ). Composition is skewed to polar residues over residues 168–192 (NAHS…NWTG) and 200–212 (VQLQ…SQEP). The span at 261–281 (QRSSISSSSSSSSPMDSQSIS) shows a compositional bias: low complexity.

As to quaternary structure, forms a heterodimeric complex with ABAP1. Interacts with SPL. In terms of tissue distribution, expressed in cotyledons, particularly in the vascular region, in leaves, roots, stems, buds, flowers and siliques.

It is found in the nucleus. Functionally, plays a pivotal role in the control of morphogenesis of shoot organs by negatively regulating the expression of boundary-specific genes such as CUC genes, probably through the induction of miRNA (e.g. miR164). In association with ABAP1, exerts a negative role in cell proliferation in leaves, possibly by inhibiting mitotic DNA replication. Participates in ovule development. This Arabidopsis thaliana (Mouse-ear cress) protein is Transcription factor TCP24 (TCP24).